The sequence spans 524 residues: 2-isopropylmalate synthase (524 aa).

The 263-residue stretch at 12-274 (VIIFDTTLRD…WNRIETTMLT (263 aa)) folds into the Pyruvate carboxyltransferase domain. Mn(2+) contacts are provided by Asp-21, His-209, His-211, and Asn-245. The regulatory domain stretch occupies residues 398–524 (KLMSLTVIAG…EDAPTVAVAG (127 aa)).

Belongs to the alpha-IPM synthase/homocitrate synthase family. LeuA type 1 subfamily. As to quaternary structure, homodimer. It depends on Mn(2+) as a cofactor.

It is found in the cytoplasm. The catalysed reaction is 3-methyl-2-oxobutanoate + acetyl-CoA + H2O = (2S)-2-isopropylmalate + CoA + H(+). It participates in amino-acid biosynthesis; L-leucine biosynthesis; L-leucine from 3-methyl-2-oxobutanoate: step 1/4. Functionally, catalyzes the condensation of the acetyl group of acetyl-CoA with 3-methyl-2-oxobutanoate (2-ketoisovalerate) to form 3-carboxy-3-hydroxy-4-methylpentanoate (2-isopropylmalate). The chain is 2-isopropylmalate synthase from Rhodopseudomonas palustris (strain TIE-1).